An 86-amino-acid chain; its full sequence is MARAGGHGMGNPVNVGIAVQADWENREFISNISLNVRRLFDFLLRFEATTKSKLASLNEKLDILERKLEVLEVQVSSATTNPSVFN.

Residues 47 to 81 (EATTKSKLASLNEKLDILERKLEVLEVQVSSATTN) are a coiled coil.

The protein belongs to the BRK1 family. As to quaternary structure, binds SCAR.

The protein localises to the cytoplasm. The protein resides in the cytoskeleton. Involved in regulation of actin and microtubule organization. Part of a WAVE complex that activates the Arp2/3 complex. The polypeptide is Probable protein BRICK1 (Oryza sativa subsp. japonica (Rice)).